The chain runs to 381 residues: Alkanesulfonate monooxygenase (381 aa).

It belongs to the SsuD family. Homotetramer.

It catalyses the reaction an alkanesulfonate + FMNH2 + O2 = an aldehyde + FMN + sulfite + H2O + 2 H(+). Catalyzes the desulfonation of aliphatic sulfonates. The polypeptide is Alkanesulfonate monooxygenase (Enterobacter sp. (strain 638)).